Here is a 173-residue protein sequence, read N- to C-terminus: Disulfide bond formation protein B (173 aa).

At Met-1 to Gln-11 the chain is on the cytoplasmic side. Residues Cys-12–Phe-28 traverse the membrane as a helical segment. The Periplasmic portion of the chain corresponds to Leu-29 to Ile-46. Cysteines 38 and 41 form a disulfide. The helical transmembrane segment at Ala-47–Ser-63 threads the bilayer. The Cytoplasmic segment spans residues Ser-64–Lys-70. The helical transmembrane segment at Ala-71–Gly-88 threads the bilayer. Over Arg-89 to Met-145 the chain is Periplasmic. Cys-104 and Cys-131 form a disulfide bridge. The chain crosses the membrane as a helical span at residues Trp-146 to Lys-164. Over Ala-165–Ser-173 the chain is Cytoplasmic.

This sequence belongs to the DsbB family.

It is found in the cell inner membrane. Its function is as follows. Required for disulfide bond formation in some periplasmic proteins. Acts by oxidizing the DsbA protein. In Xylella fastidiosa (strain 9a5c), this protein is Disulfide bond formation protein B.